A 383-amino-acid chain; its full sequence is MSIRFLKRLRAPLYIQNAYCSKNYFYRSFIQYYSPSNGPYLKISMNKAPQSLGLCTARGDSPTNQDRMAYGYLNNLKDTTNRDSPFFYGLFDGHGGTECSEFLSTNLGKIIENQDLNDTEKILKEVHSVGGYMAGLKPPFSLRTVLQSRDEDLLWRARLYYSFLQADMDYLTNYARPSPDSAVPGAVGTVAIITSKNNLSYWESDSYIIHLAHVGDTRALLCDSRTGRAHRLTFQHHPADVEEARRLRRYNMGFSRDSFGQKRFAWVANTRSFGDGYKLKKLGVVAEPQLTSIHSLRDDWSFLTLLSDGITDVVSDDEVVDIIKLSESPQDAANNIIRYAQNVGAVDDITCLVVRLPGWKKRTINDFTKNLRLEKSAYHPRRS.

Residues 51–356 form the PPM-type phosphatase domain; the sequence is SLGLCTARGD…DDITCLVVRL (306 aa). Mn(2+) is bound by residues Asp-92, Asp-308, and Asp-347.

The protein belongs to the PP2C family. Monomer. Mg(2+) is required as a cofactor. It depends on Mn(2+) as a cofactor.

The protein localises to the vacuole membrane. The catalysed reaction is O-phospho-L-seryl-[protein] + H2O = L-seryl-[protein] + phosphate. It catalyses the reaction O-phospho-L-threonyl-[protein] + H2O = L-threonyl-[protein] + phosphate. Has a role in the regulation of vacuole fusion. This chain is Protein phosphatase 2C homolog 4 (ptc4), found in Schizosaccharomyces pombe (strain 972 / ATCC 24843) (Fission yeast).